Here is a 78-residue protein sequence, read N- to C-terminus: Conotoxin Cl11.1 (78 aa).

Residues M1–G19 form the signal peptide. The propeptide occupies G20–A33. 4 disulfide bridges follow: C47–C61, C54–C66, C60–C70, and C65–C77.

Belongs to the conotoxin I1 superfamily. As to expression, expressed by the venom duct.

It localises to the secreted. This chain is Conotoxin Cl11.1, found in Californiconus californicus (California cone).